Reading from the N-terminus, the 211-residue chain is Uracil phosphoribosyltransferase (211 aa).

5-phospho-alpha-D-ribose 1-diphosphate-binding positions include Arg78, Arg103, and 130-138 (DPMLATGGT). Residues Ile196 and 201–203 (GDA) each bind uracil. Asp202 serves as a coordination point for 5-phospho-alpha-D-ribose 1-diphosphate.

This sequence belongs to the UPRTase family. Mg(2+) serves as cofactor.

It catalyses the reaction UMP + diphosphate = 5-phospho-alpha-D-ribose 1-diphosphate + uracil. It participates in pyrimidine metabolism; UMP biosynthesis via salvage pathway; UMP from uracil: step 1/1. Allosterically activated by GTP. In terms of biological role, catalyzes the conversion of uracil and 5-phospho-alpha-D-ribose 1-diphosphate (PRPP) to UMP and diphosphate. In Beutenbergia cavernae (strain ATCC BAA-8 / DSM 12333 / CCUG 43141 / JCM 11478 / NBRC 16432 / NCIMB 13614 / HKI 0122), this protein is Uracil phosphoribosyltransferase.